Reading from the N-terminus, the 466-residue chain is 3-isopropylmalate dehydratase large subunit (466 aa).

[4Fe-4S] cluster contacts are provided by Cys-347, Cys-407, and Cys-410.

This sequence belongs to the aconitase/IPM isomerase family. LeuC type 1 subfamily. As to quaternary structure, heterodimer of LeuC and LeuD. It depends on [4Fe-4S] cluster as a cofactor.

It catalyses the reaction (2R,3S)-3-isopropylmalate = (2S)-2-isopropylmalate. It functions in the pathway amino-acid biosynthesis; L-leucine biosynthesis; L-leucine from 3-methyl-2-oxobutanoate: step 2/4. In terms of biological role, catalyzes the isomerization between 2-isopropylmalate and 3-isopropylmalate, via the formation of 2-isopropylmaleate. The protein is 3-isopropylmalate dehydratase large subunit of Shewanella pealeana (strain ATCC 700345 / ANG-SQ1).